We begin with the raw amino-acid sequence, 897 residues long: Pre-mRNA-splicing factor CWC22 homolog (897 aa).

Residues 1–10 show a composition bias toward polar residues; that stretch reads MSSSRSQSPE. The interval 1–155 is disordered; the sequence is MSSSRSQSPE…EKKKKEPLDI (155 aa). 3 stretches are compositionally biased toward basic and acidic residues: residues 36-54, 93-107, and 131-155; these read SSEK…REVS, RSKE…EKSP, and RSSE…PLDI. The MIF4G domain occupies 194–382; it reads KKKIHGLVNR…ETAMQIRKDK (189 aa). The segment at 444-472 is disordered; that stretch reads NADISDEDGGDELDDEEEGSDVEEAPKKT. Acidic residues predominate over residues 447 to 466; the sequence is ISDEDGGDELDDEEEGSDVE. Residues 485–601 enclose the MI domain; sequence AFRREVYLTM…DWKILADMKM (117 aa). Low complexity-rich tracts occupy residues 689-710 and 720-730; these read LDQL…SDSS and DSSSDSSSSSE. A disordered region spans residues 689 to 897; that stretch reads LDQLKAESSS…VESDDRRRRR (209 aa). Residues 743 to 897 are compositionally biased toward basic and acidic residues; the sequence is NSEESSKKKE…VESDDRRRRR (155 aa).

Belongs to the CWC22 family. Expressed in germ cells, oocytes, and sperm cells.

It localises to the nucleus. Its subcellular location is the nucleus speckle. Its function is as follows. Required for pre-mRNA splicing and for exon-junction complex (EJC) assembly. Hinders EIF4A3 from non-specifically binding RNA and escorts it to the splicing machinery to promote EJC assembly on mature mRNAs. Through its role in EJC assembly, required for nonsense-mediated mRNA decay. Plays a role in the nuclear retention of unspliced mRNAs. Plays a role in sex determination. Required for early embryogenesis and tissue differentiation. The polypeptide is Pre-mRNA-splicing factor CWC22 homolog (Caenorhabditis elegans).